A 465-amino-acid chain; its full sequence is uncharacterized protein (465 aa).

The TRAM domain maps to 1 to 50; the sequence is MEITDLAAEGNALCRIDDMVMFVPFAAPGDRCTVQVVKKKRNFMQGRIVS. 4 residues coordinate [4Fe-4S] cluster: cysteine 63, cysteine 69, cysteine 72, and cysteine 168. Residues glutamine 293, tyrosine 322, glutamate 343, and aspartate 392 each contribute to the S-adenosyl-L-methionine site. The active-site Nucleophile is the cysteine 419.

It belongs to the class I-like SAM-binding methyltransferase superfamily. RNA M5U methyltransferase family.

This is an uncharacterized protein from Porphyromonas gingivalis (strain ATCC BAA-308 / W83).